The sequence spans 180 residues: Adenine phosphoribosyltransferase (180 aa).

Residue Ala-2 is modified to N-acetylalanine. Ser-4, Ser-15, and Ser-30 each carry phosphoserine. Tyr-60 bears the Phosphotyrosine mark. Ser-66 carries the phosphoserine modification. Lys-114 carries the N6-acetyllysine modification. Residue Thr-135 is modified to Phosphothreonine.

It belongs to the purine/pyrimidine phosphoribosyltransferase family. Homodimer.

Its subcellular location is the cytoplasm. It carries out the reaction AMP + diphosphate = 5-phospho-alpha-D-ribose 1-diphosphate + adenine. Its pathway is purine metabolism; AMP biosynthesis via salvage pathway; AMP from adenine: step 1/1. Catalyzes a salvage reaction resulting in the formation of AMP, that is energically less costly than de novo synthesis. The polypeptide is Adenine phosphoribosyltransferase (Cricetulus griseus (Chinese hamster)).